Consider the following 320-residue polypeptide: Fructose-1,6-bisphosphatase class 1 (320 aa).

The Mg(2+) site is built by Glu93, Asp114, Leu116, and Asp117. Substrate is bound by residues 117-120 (DGSS), Tyr225, and Lys256. Glu262 is a binding site for Mg(2+).

Belongs to the FBPase class 1 family. In terms of assembly, homotetramer. Requires Mg(2+) as cofactor.

It is found in the cytoplasm. The catalysed reaction is beta-D-fructose 1,6-bisphosphate + H2O = beta-D-fructose 6-phosphate + phosphate. It participates in carbohydrate biosynthesis; gluconeogenesis. The chain is Fructose-1,6-bisphosphatase class 1 from Syntrophotalea carbinolica (strain DSM 2380 / NBRC 103641 / GraBd1) (Pelobacter carbinolicus).